Here is a 292-residue protein sequence, read N- to C-terminus: 6-phospho-5-dehydro-2-deoxy-D-gluconate aldolase (292 aa).

Asp-85 functions as the Proton donor in the catalytic mechanism. Zn(2+) contacts are provided by His-86 and His-180. Gly-181 is a binding site for dihydroxyacetone phosphate. His-208 contributes to the Zn(2+) binding site. Residues 209–211 (GAS) and 230–233 (NINT) contribute to the dihydroxyacetone phosphate site. Position 233 is a phosphothreonine (Thr-233).

It belongs to the class II fructose-bisphosphate aldolase family. IolJ subfamily. It depends on Zn(2+) as a cofactor.

It carries out the reaction 6-phospho-5-dehydro-2-deoxy-D-gluconate = 3-oxopropanoate + dihydroxyacetone phosphate. It participates in polyol metabolism; myo-inositol degradation into acetyl-CoA; acetyl-CoA from myo-inositol: step 6/7. Produces dihydroxyacetone phosphate (DHAP or glycerone phosphate) and malonic semialdehyde (MSA or 3-oxopropanoate) from 6-phospho-5-dehydro-2-deoxy-D-gluconate (DKGP). This chain is 6-phospho-5-dehydro-2-deoxy-D-gluconate aldolase (iolJ), found in Bacillus licheniformis (strain ATCC 14580 / DSM 13 / JCM 2505 / CCUG 7422 / NBRC 12200 / NCIMB 9375 / NCTC 10341 / NRRL NRS-1264 / Gibson 46).